The chain runs to 317 residues: tRNA dimethylallyltransferase (317 aa).

18 to 25 (GPTATGKT) contributes to the ATP binding site. A substrate-binding site is contributed by 20–25 (TATGKT). Interaction with substrate tRNA regions lie at residues 43–46 (DSAL), 167–171 (QRIQR), and 281–288 (KRQITWLR).

This sequence belongs to the IPP transferase family. Monomer. Requires Mg(2+) as cofactor.

It catalyses the reaction adenosine(37) in tRNA + dimethylallyl diphosphate = N(6)-dimethylallyladenosine(37) in tRNA + diphosphate. Catalyzes the transfer of a dimethylallyl group onto the adenine at position 37 in tRNAs that read codons beginning with uridine, leading to the formation of N6-(dimethylallyl)adenosine (i(6)A). This chain is tRNA dimethylallyltransferase, found in Alkalilimnicola ehrlichii (strain ATCC BAA-1101 / DSM 17681 / MLHE-1).